Here is a 267-residue protein sequence, read N- to C-terminus: Serine/arginine-rich splicing factor 1 (267 aa).

Positions 16–91 (CRIYVGNLPP…YRLRVEFPRS (76 aa)) constitute an RRM 1 domain. Disordered regions lie at residues 90 to 137 (RSGR…PSRR) and 212 to 267 (KVDG…RSRT). The span at 93–127 (RGAGGRGGGGGGGGGGGGGGGGGGGGGGGGGGGAP) shows a compositional bias: gly residues. Positions 140 to 214 (YRVVVSGLPP…ETAYIRVKVD (75 aa)) constitute an RRM 2 domain. Residues 224-267 (SRSRSRSRSRSRSRSNSRSRSYSPRRSRGSPRYSPRHSRSRSRT) show a composition bias toward basic residues.

The protein belongs to the splicing factor SR family.

It is found in the cytoplasm. Its subcellular location is the nucleus speckle. Functionally, may play a role in preventing exon skipping, ensuring the accuracy of splicing and regulating alternative splicing. In Xenopus tropicalis (Western clawed frog), this protein is Serine/arginine-rich splicing factor 1 (srsf1).